A 154-amino-acid polypeptide reads, in one-letter code: Large ribosomal subunit protein uL15 (154 aa).

Positions 1-61 are disordered; it reads MDLSTLKPVA…GGQMPLMRRM (61 aa).

This sequence belongs to the universal ribosomal protein uL15 family. As to quaternary structure, part of the 50S ribosomal subunit.

Binds to the 23S rRNA. This chain is Large ribosomal subunit protein uL15, found in Oenococcus oeni (strain ATCC BAA-331 / PSU-1).